Here is a 198-residue protein sequence, read N- to C-terminus: Large ribosomal subunit protein bL25 (198 aa).

It belongs to the bacterial ribosomal protein bL25 family. CTC subfamily. In terms of assembly, part of the 50S ribosomal subunit; part of the 5S rRNA/L5/L18/L25 subcomplex. Contacts the 5S rRNA. Binds to the 5S rRNA independently of L5 and L18.

Its function is as follows. This is one of the proteins that binds to the 5S RNA in the ribosome where it forms part of the central protuberance. The polypeptide is Large ribosomal subunit protein bL25 (Bordetella avium (strain 197N)).